The sequence spans 497 residues: Cysteine--tRNA ligase (497 aa).

Cys-46 lines the Zn(2+) pocket. Residues 48-58 (PTVYSDAHLGH) carry the 'HIGH' region motif. The Zn(2+) site is built by Cys-237, His-262, and Glu-266. Residues 293–297 (KMSKS) carry the 'KMSKS' region motif. Lys-296 contacts ATP.

This sequence belongs to the class-I aminoacyl-tRNA synthetase family. In terms of assembly, monomer. It depends on Zn(2+) as a cofactor.

The protein resides in the cytoplasm. The catalysed reaction is tRNA(Cys) + L-cysteine + ATP = L-cysteinyl-tRNA(Cys) + AMP + diphosphate. This Deinococcus geothermalis (strain DSM 11300 / CIP 105573 / AG-3a) protein is Cysteine--tRNA ligase.